The chain runs to 243 residues: MIVIPAIDLKEGRCVRLEQGLMEKDTVYNDNPGAQARSWQEQGGELLHIVDLDGAFAGVPRNRDAIRAIAEAVSIPTELGGGIRDLPTIEAYLELGIDRVILGTVAKENPELVREACRLFPGRIVVGIDARDGLVAVRGWADVTEKLATELAKEMEGFGVEAIIYTDIARDGMMGGPNLEATRALAESISVPVIASGGVSCLEDIARLMTIEDSGVTGVITGKALYTGSLDLREAVALTKGKA.

The active-site Proton acceptor is D8. The Proton donor role is filled by D129.

This sequence belongs to the HisA/HisF family.

It localises to the cytoplasm. It catalyses the reaction 1-(5-phospho-beta-D-ribosyl)-5-[(5-phospho-beta-D-ribosylamino)methylideneamino]imidazole-4-carboxamide = 5-[(5-phospho-1-deoxy-D-ribulos-1-ylimino)methylamino]-1-(5-phospho-beta-D-ribosyl)imidazole-4-carboxamide. The protein operates within amino-acid biosynthesis; L-histidine biosynthesis; L-histidine from 5-phospho-alpha-D-ribose 1-diphosphate: step 4/9. This Syntrophotalea carbinolica (strain DSM 2380 / NBRC 103641 / GraBd1) (Pelobacter carbinolicus) protein is 1-(5-phosphoribosyl)-5-[(5-phosphoribosylamino)methylideneamino] imidazole-4-carboxamide isomerase.